The sequence spans 382 residues: ATP phosphoribosyltransferase regulatory subunit (382 aa).

It belongs to the class-II aminoacyl-tRNA synthetase family. HisZ subfamily. In terms of assembly, heteromultimer composed of HisG and HisZ subunits.

The protein localises to the cytoplasm. It participates in amino-acid biosynthesis; L-histidine biosynthesis; L-histidine from 5-phospho-alpha-D-ribose 1-diphosphate: step 1/9. Its function is as follows. Required for the first step of histidine biosynthesis. May allow the feedback regulation of ATP phosphoribosyltransferase activity by histidine. The sequence is that of ATP phosphoribosyltransferase regulatory subunit from Burkholderia pseudomallei (strain 1106a).